Reading from the N-terminus, the 268-residue chain is Tryptophan synthase alpha chain (268 aa).

Catalysis depends on proton acceptor residues Glu49 and Asp60.

It belongs to the TrpA family. In terms of assembly, tetramer of two alpha and two beta chains.

It carries out the reaction (1S,2R)-1-C-(indol-3-yl)glycerol 3-phosphate + L-serine = D-glyceraldehyde 3-phosphate + L-tryptophan + H2O. The protein operates within amino-acid biosynthesis; L-tryptophan biosynthesis; L-tryptophan from chorismate: step 5/5. The alpha subunit is responsible for the aldol cleavage of indoleglycerol phosphate to indole and glyceraldehyde 3-phosphate. The sequence is that of Tryptophan synthase alpha chain from Yersinia pseudotuberculosis serotype O:3 (strain YPIII).